The primary structure comprises 328 residues: Malate dehydrogenase (328 aa).

12–18 (GAAGQIG) is an NAD(+) binding site. The substrate site is built by R95 and R101. Residues N108, Q115, and 132–134 (VGN) contribute to the NAD(+) site. The substrate site is built by N134 and R165. H190 (proton acceptor) is an active-site residue.

The protein belongs to the LDH/MDH superfamily. MDH type 2 family.

It carries out the reaction (S)-malate + NAD(+) = oxaloacetate + NADH + H(+). Catalyzes the reversible oxidation of malate to oxaloacetate. The protein is Malate dehydrogenase of Paracidovorax citrulli (strain AAC00-1) (Acidovorax citrulli).